The following is a 293-amino-acid chain: SAGA-associated factor 29 (293 aa).

The stretch at 12-88 (ELLAELQRLL…KALDKIAEIK (77 aa)) forms a coiled coil. The region spanning 152-293 (GDYVAKPGDK…VVACKETKKK (142 aa)) is the SGF29 C-terminal domain. Histone H3K4me3 N-terminus binding regions lie at residues 194 to 196 (DID) and 240 to 243 (QTTC). The histone H3K4me3 binding stretch occupies residues 264-266 (FED).

This sequence belongs to the SGF29 family. As to quaternary structure, interacts with dimethylated and trimethylated 'Lys-4' of histone H3 (H3K4me2 and H3K4me3), with a preference for the trimethylated form (H3K4me3). Component of some SAGA-type complexes. Component of the ADA2A-containing complex (ATAC).

It is found in the nucleus. Functionally, chromatin reader component of some histone acetyltransferase (HAT) SAGA-type complexes like the TFTC-HAT, ATAC or STAGA complexes. SGF29 specifically recognizes and binds methylated 'Lys-4' of histone H3 (H3K4me), with a preference for trimethylated form (H3K4me3). In the SAGA-type complexes, SGF29 is required to recruit complexes to H3K4me. Also binds non-histone proteins that are methylated on Lys residues. The protein is SAGA-associated factor 29 of Gallus gallus (Chicken).